Consider the following 143-residue polypeptide: MAKKIQAYIKLQVKAGQANPSPPVGPALGQHGVNIMEFCKAFNAKTQGQEPGLPTPVIITVYSDRSFTFETKSTPAAVLLKKAAGITSGSARPNSQKVGTVTRAQLEEIAKTKQADLTAADLDAAVRTIAGSARSMGLNVEGV.

It belongs to the universal ribosomal protein uL11 family. As to quaternary structure, part of the ribosomal stalk of the 50S ribosomal subunit. Interacts with L10 and the large rRNA to form the base of the stalk. L10 forms an elongated spine to which L12 dimers bind in a sequential fashion forming a multimeric L10(L12)X complex. One or more lysine residues are methylated.

Functionally, forms part of the ribosomal stalk which helps the ribosome interact with GTP-bound translation factors. The sequence is that of Large ribosomal subunit protein uL11 from Pseudomonas paraeruginosa (strain DSM 24068 / PA7) (Pseudomonas aeruginosa (strain PA7)).